The following is a 393-amino-acid chain: uncharacterized protein (393 aa).

Transmembrane regions (helical) follow at residues 15–35 (IVAF…VTIF), 56–76 (WGWI…NVII), 86–106 (FYAS…FQIV), 131–151 (AVLI…LITW), 176–196 (LSLT…VIAF), 253–273 (LLAN…VFMI), 289–309 (LIDL…IPVA), and 349–369 (VYLP…QVIW).

It localises to the cell membrane. This is an uncharacterized protein from Mycoplasma genitalium (strain ATCC 33530 / DSM 19775 / NCTC 10195 / G37) (Mycoplasmoides genitalium).